The following is a 103-amino-acid chain: uncharacterized protein (103 aa).

This is an uncharacterized protein from Escherichia coli (strain K12).